Consider the following 253-residue polypeptide: Uroplakin-3b-like protein 1 (253 aa).

An N-terminal signal peptide occupies residues 1-26 (MGLGRGQSPLLMALLLLLACLQMGMS). Residues 27 to 194 (LERISYVPQL…PGPQTAGTVV (168 aa)) are Extracellular-facing. N78 and N130 each carry an N-linked (GlcNAc...) asparagine glycan. A helical membrane pass occupies residues 195–215 (IIAILSVLLAVLLAALLALLI). The Cytoplasmic segment spans residues 216-253 (FTWYDTCGSTPISGPGELVFVRKYDTHHMSRPSTVGGS).

This sequence belongs to the uroplakin-3 family.

It localises to the membrane. The protein is Uroplakin-3b-like protein 1 of Bos taurus (Bovine).